The chain runs to 654 residues: MICOS complex subunit MIC60-2 (654 aa).

Residues 1-12 (MRGSRNLLTQRL) constitute a mitochondrion transit peptide. Over 13–20 (ASSRATGS) the chain is Mitochondrial matrix. A helical membrane pass occupies residues 21–43 (SGGLKFVGATVGAVTAGAAGVAG). Over 44–654 (YASYDNEFRK…AALTSIRSTY (611 aa)) the chain is Mitochondrial intermembrane. Basic and acidic residues predominate over residues 115 to 129 (LKETTEPKKIEKKPE). The segment at 115–140 (LKETTEPKKIEKKPENPYIGAKTPLN) is disordered.

The protein belongs to the MICOS complex subunit Mic60 family. In terms of assembly, component of the mitochondrial contact site and cristae organizing system (MICOS) complex. Expressed in the gonads and muscle cells.

It is found in the mitochondrion inner membrane. The protein localises to the cytoplasm. Its function is as follows. Sustains mitochondrial morphology probably through maintaining cristae morphology. May act as a component of the MICOS complex, a large protein complex of the mitochondria. This Caenorhabditis elegans protein is MICOS complex subunit MIC60-2.